An 89-amino-acid polypeptide reads, in one-letter code: Small ribosomal subunit protein uS15 (89 aa).

The protein belongs to the universal ribosomal protein uS15 family. In terms of assembly, part of the 30S ribosomal subunit. Forms a bridge to the 50S subunit in the 70S ribosome, contacting the 23S rRNA.

Functionally, one of the primary rRNA binding proteins, it binds directly to 16S rRNA where it helps nucleate assembly of the platform of the 30S subunit by binding and bridging several RNA helices of the 16S rRNA. Its function is as follows. Forms an intersubunit bridge (bridge B4) with the 23S rRNA of the 50S subunit in the ribosome. The protein is Small ribosomal subunit protein uS15 of Shewanella piezotolerans (strain WP3 / JCM 13877).